The chain runs to 339 residues: Uricase (339 aa).

Residues Lys-33 and Thr-78 each act as charge relay system in the active site. Residues Thr-78, Asp-79, Phe-201, Arg-218, Val-266, Gln-267, and Asn-293 each contribute to the urate site. His-295 functions as the Charge relay system in the catalytic mechanism. The short motif at 337-339 (SHL) is the Microbody targeting signal element.

Belongs to the uricase family.

It localises to the peroxisome. The enzyme catalyses urate + O2 + H2O = 5-hydroxyisourate + H2O2. It participates in purine metabolism; urate degradation; (S)-allantoin from urate: step 1/3. Functionally, catalyzes the oxidation of uric acid to 5-hydroxyisourate, which is further processed to form (S)-allantoin. This chain is Uricase (Uro), found in Drosophila subobscura (Fruit fly).